Reading from the N-terminus, the 518-residue chain is Alpha-ionylideneethane synthase abl3 (518 aa).

Disordered regions lie at residues 294 to 355 (AAPG…SVFE) and 440 to 466 (KAPP…QRSK). Residues 299–339 (TSSDNSSDNRSSSISSTSSTGTDGSGAGDASSVHSSGVHSD) are compositionally biased toward low complexity.

The protein belongs to the alpha-ionylideneethane synthase family.

Its pathway is hormone biosynthesis. Alpha-ionylideneethane synthase involved in the biosynthesis of abscisic acid (ABA), a phytohormone that acts antagonistically toward salicylic acid (SA), jasmonic acid (JA) and ethylene (ETH) signaling, to impede plant defense responses. During pathogen-host interaction, ABA plays a dual role in disease severity by increasing plant susceptibility and accelerating pathogenesis in the fungus itself. The first step of the pathway catalyzes the reaction from farnesyl diphosphate to alpha-ionylideneethane performed by the alpha-ionylideneethane synthase ABA3 via a three-step reaction mechanism involving 2 neutral intermediates, beta-farnesene and allofarnesene. The cytochrome P450 monooxygenase ABA1 might then be involved in the conversion of alpha-ionylideneethane to alpha-ionylideneacetic acid. Alpha-ionylideneacetic acid is further converted to abscisic acid in 2 steps involving the cytochrome P450 monooxygenase ABA2 and the short-chain dehydrogenase/reductase ABA4, via the intermediates 1'-deoxy-ABA or 1',4'-trans-diol-ABA, depending on the order of action of these 2 enzymes. ABA2 is responsible for the hydroxylation of carbon atom C-1' and ABA4 might be involved in the oxidation of the C-4' carbon atom. This Pyricularia oryzae (strain Y34) (Rice blast fungus) protein is Alpha-ionylideneethane synthase abl3.